The following is a 67-amino-acid chain: Conotoxin Cal14.2c (67 aa).

A signal peptide spans 1-20 (MNVTVMFLVLLLLTMPLTDG). A propeptide spanning residues 21 to 48 (FNIRATNGGELFGPVQRDAGNVLDHGFQ) is cleaved from the precursor.

It belongs to the conotoxin L superfamily. Post-translationally, contains 2 disulfide bonds. As to expression, expressed by the venom duct.

The protein localises to the secreted. In terms of biological role, probable neurotoxin with unknown target. Possibly targets ion channels. In Californiconus californicus (California cone), this protein is Conotoxin Cal14.2c.